A 317-amino-acid polypeptide reads, in one-letter code: Non-structural protein 2 (317 aa).

ATP contacts are provided by residues 107-109 (SVR), Lys188, and 221-223 (HGK). The tract at residues 205 to 241 (LVAELRWQYNRFAVITHGKGHYRVVKYSSVANHADRV) is RNA-binding. The active-site For NTPase and RTPase activities is His225. Arg227 lines the ATP pocket.

It belongs to the rotavirus NSP2 family. In terms of assembly, homooctamer. Interacts with VP1; this interaction is weak. Interacts with NSP5; this interaction leads to up-regulation of NSP5 phosphorylation and formation of viral factories. Interacts with host DCP1A, DCP1B, DDX6, EDC4 and EIF2S1/eIF2-alpha; these interactions are probably part of the sequestration of some host SGs and PBs proteins in viral factories. It depends on Mg(2+) as a cofactor.

It localises to the host cytoplasm. Functionally, participates in replication and packaging of the viral genome. Plays a crucial role, together with NSP5, in the formation of virus factories (viroplasms), which are large inclusions in the host cytoplasm where replication intermediates are assembled and viral RNA replication takes place. Displays ssRNA binding, NTPase, RNA triphosphatase (RTPase) and ATP-independent helix-unwinding activities. The unwinding activity may prepare and organize plus-strand RNAs for packaging and replication by removing interfering secondary structures. The RTPase activity plays a role in the removal of the gamma-phosphate from the rotavirus RNA minus strands of dsRNA genome segments. Participates in the selective exclusion of host proteins from stress granules (SG) and P bodies (PB). Also participates in the sequestration of these remodeled organelles in viral factories. The polypeptide is Non-structural protein 2 (Homo sapiens (Human)).